The sequence spans 235 residues: Ribonuclease 3 (235 aa).

Residues 6–131 (IDQLKKLTGH…LIAVIYLDGG (126 aa)) enclose the RNase III domain. Residue glutamate 44 participates in Mg(2+) binding. Aspartate 48 is an active-site residue. Positions 117 and 120 each coordinate Mg(2+). Residue glutamate 120 is part of the active site. Positions 156–225 (DAKTELQEWA…AEKILRREGM (70 aa)) constitute a DRBM domain.

It belongs to the ribonuclease III family. In terms of assembly, homodimer. Mg(2+) is required as a cofactor.

It is found in the cytoplasm. It catalyses the reaction Endonucleolytic cleavage to 5'-phosphomonoester.. In terms of biological role, digests double-stranded RNA. Involved in the processing of primary rRNA transcript to yield the immediate precursors to the large and small rRNAs (23S and 16S). Processes some mRNAs, and tRNAs when they are encoded in the rRNA operon. Processes pre-crRNA and tracrRNA of type II CRISPR loci if present in the organism. The chain is Ribonuclease 3 from Bartonella bacilliformis (strain ATCC 35685 / KC583 / Herrer 020/F12,63).